A 2465-amino-acid chain; its full sequence is Highly reducing polyketide synthase milA (2465 aa).

In terms of domain architecture, Ketosynthase family 3 (KS3) spans 1 to 434 (MEPIAIVGSA…GANCHVILEG (434 aa)). Active-site for beta-ketoacyl synthase activity residues include cysteine 172, histidine 311, and histidine 355. The segment at 450 to 476 (KPSLSSSPSLSPTSTSPPTPRTPANSL) is disordered. Residues 451–463 (PSLSSSPSLSPTS) are compositionally biased toward low complexity. The malonyl-CoA:ACP transacylase (MAT) domain stretch occupies residues 567 to 888 (VFTGQGAQWA…CGTLSRAVDD (322 aa)). The interval 957–1096 (HPLLGVRTNT…GKVQLFVGGD (140 aa)) is N-terminal hotdog fold. A dehydratase (DH) domain region spans residues 957–1265 (HPLLGVRTNT…LTVSPVAPVT (309 aa)). Residues 957–1267 (HPLLGVRTNT…VSPVAPVTAD (311 aa)) form the PKS/mFAS DH domain. The Proton acceptor; for dehydratase activity role is filled by histidine 989. The segment at 1111-1267 (LNEIDVDTFY…VSPVAPVTAD (157 aa)) is C-terminal hotdog fold. Residue aspartate 1174 is the Proton donor; for dehydratase activity of the active site. The segment at 1334-1367 (HSTNGLTNGHASTNGHGSTNGHISTNGHSTNGDV) is disordered. The segment at 2095–2269 (TYFLVGMAGS…AASVINLTGV (175 aa)) is ketoreductase (KR)domain. One can recognise a Carrier domain in the interval 2384 to 2459 (DMIFRAFQTV…QVVWSVVHQI (76 aa)). O-(pantetheine 4'-phosphoryl)serine is present on serine 2419.

It depends on pantetheine 4'-phosphate as a cofactor.

The enzyme catalyses 10 malonyl-CoA + acetyl-CoA + 3 AH2 + 8 NADPH + 18 H(+) = cordypyrone A + 3 A + 10 CO2 + 8 NADP(+) + 11 CoA + 8 H2O. Its pathway is secondary metabolite biosynthesis. Highly reducing polyketide synthase (HR-PKS); part of the gene cluster that mediates the biosynthesis of cordypyrones A and B, 2 pyrones that show modest activities against pathogenic bacteria including methicillin-resistant Staphylococcus aureus (MRSA), Mycobacterium tuberculosis and Bacillus cereus. The HR-PKS milA catalyzes the formation of cordypyrones A via condensation of one acetate with 10 malonate units. Since milA lacks an enoyl reductase domain, the 2 beta-keto processing domains DH and KR of milA collaborate with the trans-enoyl reductase milB to catalyze the different levels of reduction. The cytochrome P450 monooxygenase milC then hydroxylates the C-22 of cordypyrones A to yield cordypyrones B. The chain is Highly reducing polyketide synthase milA from Cordyceps militaris (strain CM01) (Caterpillar fungus).